A 95-amino-acid polypeptide reads, in one-letter code: Co-chaperonin GroES (95 aa).

Belongs to the GroES chaperonin family. As to quaternary structure, heptamer of 7 subunits arranged in a ring. Interacts with the chaperonin GroEL.

Its subcellular location is the cytoplasm. Functionally, together with the chaperonin GroEL, plays an essential role in assisting protein folding. The GroEL-GroES system forms a nano-cage that allows encapsulation of the non-native substrate proteins and provides a physical environment optimized to promote and accelerate protein folding. GroES binds to the apical surface of the GroEL ring, thereby capping the opening of the GroEL channel. This is Co-chaperonin GroES from Marinobacter nauticus (strain ATCC 700491 / DSM 11845 / VT8) (Marinobacter aquaeolei).